Reading from the N-terminus, the 262-residue chain is Global transcriptional regulator CodY (262 aa).

The tract at residues 1 to 159 (MAHLLEKTRK…ASTVVGIQLL (159 aa)) is GAF domain. The segment at residues 207-226 (ASVIADRIGITRSVIVNALR) is a DNA-binding region (H-T-H motif).

The protein belongs to the CodY family.

It localises to the cytoplasm. Functionally, DNA-binding global transcriptional regulator which is involved in the adaptive response to starvation and acts by directly or indirectly controlling the expression of numerous genes in response to nutrient availability. During rapid exponential growth, CodY is highly active and represses genes whose products allow adaptation to nutrient depletion. The polypeptide is Global transcriptional regulator CodY (Streptococcus pneumoniae serotype 4 (strain ATCC BAA-334 / TIGR4)).